Consider the following 152-residue polypeptide: UPF0178 protein CKL_3490 (152 aa).

The protein belongs to the UPF0178 family.

The chain is UPF0178 protein CKL_3490 from Clostridium kluyveri (strain ATCC 8527 / DSM 555 / NBRC 12016 / NCIMB 10680 / K1).